A 325-amino-acid polypeptide reads, in one-letter code: Hydroxymethylglutaryl-CoA lyase, mitochondrial (325 aa).

The N-terminal 27 residues, 1 to 27 (MASVRKAFPRRLVGLTSLRAVSTSSMG), are a transit peptide targeting the mitochondrion. The Pyruvate carboxyltransferase domain occupies 33-300 (VKIVEVGPRD…HTGVNLQKLL (268 aa)). Arg-41 provides a ligand contact to substrate. Residue Asp-42 coordinates a divalent metal cation. Lys-48 is subject to N6-acetyllysine; alternate. Lys-48 is subject to N6-succinyllysine; alternate. Position 111 is an N6-acetyllysine (Lys-111). N6-acetyllysine; alternate is present on residues Lys-137 and Lys-179. Residues Lys-137 and Lys-179 each carry the N6-succinyllysine; alternate modification. 2 residues coordinate a divalent metal cation: His-233 and His-235. The active site involves Cys-266. Asn-275 lines the a divalent metal cation pocket. The Microbody targeting signal motif lies at 323–325 (CKL). Lys-324 carries the N6-acetyllysine modification.

It belongs to the HMG-CoA lyase family. Homodimer; disulfide-linked. Can also form homotetramers.

It localises to the mitochondrion matrix. The protein resides in the peroxisome. It catalyses the reaction (3S)-3-hydroxy-3-methylglutaryl-CoA = acetoacetate + acetyl-CoA. It functions in the pathway metabolic intermediate metabolism; (S)-3-hydroxy-3-methylglutaryl-CoA degradation; acetoacetate from (S)-3-hydroxy-3-methylglutaryl-CoA: step 1/1. Its function is as follows. Mitochondrial 3-hydroxy-3-methylglutaryl-CoA lyase that catalyzes a cation-dependent cleavage of (S)-3-hydroxy-3-methylglutaryl-CoA into acetyl-CoA and acetoacetate, a key step in ketogenesis. Terminal step in leucine catabolism. Ketone bodies (beta-hydroxybutyrate, acetoacetate and acetone) are essential as an alternative source of energy to glucose, as lipid precursors and as regulators of metabolism. This is Hydroxymethylglutaryl-CoA lyase, mitochondrial (Hmgcl) from Mus musculus (Mouse).